A 430-amino-acid chain; its full sequence is MTSVVVVGTQWGDEGKGKITDFLSSDAEVIARYQGGDNAGHTIVIDNKKFKLHLIPSGIFFPEKISVIGNGVVVNPKSLVKELAYLHEEGVTTDNLRISDRAHVILPYHIKLDQLQEEAKGDNKIGTTIKGIGPAYMDKAARVGIRIADLLDRDIFAERLKTNLAEKNRLFEKMYDSAPIAFDEIFEEYYGYGQEIKKYVTDTSVILNDALDAGKRVLFEGAQGVMLDIDQGTYPFVTSSNPVAGGVTIGSGVGPSKINKVVGVCKAYTSRVGDGPFPTELFDEVGERIREIGHEYGTTTGRPRRVGWFDSVVMRHSRRVSGITNLSLNSIDVLSGLETVKICVAYDLDGKRIDHYPASLEQLKRCKPIYEELPGWSEDITGVRSLEDLPENARNYVRRIGELVGVRISTFSVGPGREQTNILESVWATI.

GTP-binding positions include 12-18 and 40-42; these read GDEGKGK and GHT. Asp-13 (proton acceptor) is an active-site residue. Mg(2+) contacts are provided by Asp-13 and Gly-40. IMP-binding positions include 13–16, 38–41, Thr-128, Arg-142, Gln-223, Thr-238, and Arg-302; these read DEGK and NAGH. The active-site Proton donor is the His-41. A substrate-binding site is contributed by 298–304; it reads TTTGRPR. Residues Arg-304, 330-332, and 412-414 each bind GTP; these read SID and SVG.

This sequence belongs to the adenylosuccinate synthetase family. In terms of assembly, homodimer. The cofactor is Mg(2+).

It is found in the cytoplasm. The catalysed reaction is IMP + L-aspartate + GTP = N(6)-(1,2-dicarboxyethyl)-AMP + GDP + phosphate + 2 H(+). The protein operates within purine metabolism; AMP biosynthesis via de novo pathway; AMP from IMP: step 1/2. Plays an important role in the de novo pathway of purine nucleotide biosynthesis. Catalyzes the first committed step in the biosynthesis of AMP from IMP. This Streptococcus equi subsp. zooepidemicus (strain H70) protein is Adenylosuccinate synthetase.